We begin with the raw amino-acid sequence, 251 residues long: Adenosylcobinamide-GDP ribazoletransferase (251 aa).

6 helical membrane passes run 29 to 49 (FAGM…ILAV), 65 to 85 (SLLI…DGAM), 110 to 130 (AFGA…LCYL), 136 to 156 (LLIL…IVRY), 175 to 195 (AIDL…IARF), and 198 to 218 (LTVA…TGAW).

It belongs to the CobS family. It depends on Mg(2+) as a cofactor.

It is found in the cell inner membrane. The catalysed reaction is alpha-ribazole + adenosylcob(III)inamide-GDP = adenosylcob(III)alamin + GMP + H(+). It carries out the reaction alpha-ribazole 5'-phosphate + adenosylcob(III)inamide-GDP = adenosylcob(III)alamin 5'-phosphate + GMP + H(+). It functions in the pathway cofactor biosynthesis; adenosylcobalamin biosynthesis; adenosylcobalamin from cob(II)yrinate a,c-diamide: step 7/7. Functionally, joins adenosylcobinamide-GDP and alpha-ribazole to generate adenosylcobalamin (Ado-cobalamin). Also synthesizes adenosylcobalamin 5'-phosphate from adenosylcobinamide-GDP and alpha-ribazole 5'-phosphate. The protein is Adenosylcobinamide-GDP ribazoletransferase of Synechococcus elongatus (strain ATCC 33912 / PCC 7942 / FACHB-805) (Anacystis nidulans R2).